The sequence spans 85 residues: Homeobox protein knotted-1-like 4 (85 aa).

The region spanning 1-21 (ELKYQLLKKYSGYLSSLRQEF) is the ELK domain. Residues 22–85 (SKKKKKGKLP…NQRKRHWKPS (64 aa)) constitute a DNA-binding region (homeobox; TALE-type).

This sequence belongs to the TALE/KNOX homeobox family. Strongly expressed in ear inflorescence primordia and shoot meristem. Weakly expressed in embryos. Absent from leaves.

The protein localises to the nucleus. Its function is as follows. Probably binds to the DNA sequence 5'-TGAC-3'. This is Homeobox protein knotted-1-like 4 (KNOX4) from Zea mays (Maize).